Reading from the N-terminus, the 265-residue chain is ETS-related transcription factor Elf-5 (265 aa).

Residues 43–129 (YPAFEHQTAC…FILQNIRTQG (87 aa)) enclose the PNT domain. The segment at residues 173–254 (SHLWEFVRDL…VDRRLVYKFG (82 aa)) is a DNA-binding region (ETS).

Belongs to the ETS family. As to expression, expressed exclusively in tissues with a high content of epithelial cells. Highly expressed in salivary gland, mammary gland, kidney and prostate. Weakly expressed in placenta and lung. Isoform 1 and isoform 2 are differentially expressed in different tissues. In the kidney, only isoform 1 was expressed, while prostate expressed both isoforms, with levels of isoform 2 being higher. Expression is up-regulated during keratinocyte differentiation. Several epithelial carcinoma cell lines showed lack of expression.

It is found in the nucleus. Its function is as follows. Transcriptionally activator that may play a role in regulating the later stages of keratinocytes terminal differentiation. In terms of biological role, isoform 2 binds to DNA sequences containing the consensus nucleotide core sequence GGA[AT]. Transcriptionally activates SPRR2A and the parotid gland-specific PSP promoters. This Homo sapiens (Human) protein is ETS-related transcription factor Elf-5 (ELF5).